A 64-amino-acid polypeptide reads, in one-letter code: Large ribosomal subunit protein bL35 (64 aa).

Residues 19–44 form a disordered region; the sequence is TGKLKASRPGRRHKLTGKTPKRKRQL. The span at 23–44 shows a compositional bias: basic residues; sequence KASRPGRRHKLTGKTPKRKRQL.

This sequence belongs to the bacterial ribosomal protein bL35 family.

This Protochlamydia amoebophila (strain UWE25) protein is Large ribosomal subunit protein bL35.